We begin with the raw amino-acid sequence, 268 residues long: Tryptophan synthase alpha chain (268 aa).

Active-site proton acceptor residues include E49 and D60.

The protein belongs to the TrpA family. As to quaternary structure, tetramer of two alpha and two beta chains.

The catalysed reaction is (1S,2R)-1-C-(indol-3-yl)glycerol 3-phosphate + L-serine = D-glyceraldehyde 3-phosphate + L-tryptophan + H2O. It functions in the pathway amino-acid biosynthesis; L-tryptophan biosynthesis; L-tryptophan from chorismate: step 5/5. Functionally, the alpha subunit is responsible for the aldol cleavage of indoleglycerol phosphate to indole and glyceraldehyde 3-phosphate. The chain is Tryptophan synthase alpha chain from Aeromonas salmonicida (strain A449).